Here is a 205-residue protein sequence, read N- to C-terminus: Shieldin complex subunit 1 (205 aa).

As to quaternary structure, component of the shieldin complex, consisting of SHLD1, SHLD2, SHLD3 and MAD2L2/REV7. Within the complex, SHLD2 forms a scaffold which interacts with a SHLD3-MAD2L2 subcomplex via its N-terminus, and with SHLD1 via its C-terminus. Interacts with ASTE1.

It localises to the chromosome. In terms of biological role, component of the shieldin complex, which plays an important role in repair of DNA double-stranded breaks (DSBs). During G1 and S phase of the cell cycle, the complex functions downstream of TP53BP1 to promote non-homologous end joining (NHEJ) and suppress DNA end resection. Mediates various NHEJ-dependent processes including immunoglobulin class-switch recombination, and fusion of unprotected telomeres. The chain is Shieldin complex subunit 1 from Homo sapiens (Human).